The primary structure comprises 394 residues: MSGEDEQQEQTIAEDLVVTKYKMGGDIANRVLRSLVEASSSGVSVLSLCEKGDAMIMEETGKIFKKEKEMKKGIAFPTSISVNNCVCHFSPLKSDQDYILKEGDLVKIDLGVHVDGFIANVAHTFVIGVAQGSQVTGRKADVIKAAHLCAEAALRLVKPGNQNTQVTEAWNKVAHSFNCTPIEGMLSHQLKQHVIDGEKTIIQNPTDQQKKDHEKAEFEVHEVYAVDVLVSSGEGKAKDAGQRTTIYKRDPSKQYGLKMKTSRAFFSEVERRFDAMPFTLRAFEDEKKARMGVVECAKHELLQPFNVLYEKEGEFVAQFKFTVLLMPNGPMRITSGPFEPDLYKSEMEVQDAELKALLQSSASRKTQKKKKKKASKTAENATSGETLEENGAGD.

Position 2 is an N-acetylserine (serine 2). Serine 2 carries the phosphoserine modification. Residues serine 2–leucine 48 are necessary for nucleolar localization. The RNA-binding stretch occupies residues leucine 46–alanine 54. Lysine 298 participates in a covalent cross-link: Glycyl lysine isopeptide (Lys-Gly) (interchain with G-Cter in SUMO2). The interval leucine 301–aspartate 394 is necessary for nucleolar localization. Serine 335 carries the post-translational modification Phosphoserine. A disordered region spans residues leucine 358–aspartate 394. Serine 361 carries the phosphoserine; by PKC/PRKCD modification. The segment at serine 361–serine 375 is interaction with RNA. Positions lysine 365–serine 375 are enriched in basic residues. Phosphothreonine is present on residues threonine 366 and threonine 386.

This sequence belongs to the peptidase M24 family. As to quaternary structure, isoform 2 interacts with the cytoplasmic domain of non-phosphorylated ERBB3; the interaction requires PKC activity. Interacts with AR. Treatment with HRG leads to dissociation from ERBB3 and increases association with AR. Interacts with nucleolin/NCL. Component of a ribonucleoprotein complex containing at least PA2G4, NCL, TOP1, PABPC2, RPLP0, acetylated histone H1 (HIST1H1A or H1F1), histone H1 2/4, RPL4, RPL8, RPL15, RPL18, RPL18A, RPL21, RPL11, RPL12, RPL28, RPL27, RPLP2 and RPL24. Interacts with HDAC2. Interacts with RB1; the interaction is enhanced upon PA2G4 dephosphorylation. Isoform 1 and isoform 2 interact with RNF20. Isoform 2 interacts with HUWE1. Interacts with AKT1. Interacts with DNAJC21. In terms of processing, phosphorylated on serine and threonine residues. Phosphorylation is enhanced by HRG treatment. Basal phosphorylation is PKC-dependent and HRG-induced phosphorylation is predominantly PKC-independent. Phosphorylation at Ser-361 by PKC/PRKCD regulates its nucleolar localization. Isoform 2 is polyubiquitinated, leading to proteasomal degradation and phosphorylation by PKC/PRKCD enhances polyubiquitination.

It localises to the cytoplasm. It is found in the nucleus. The protein resides in the nucleolus. May play a role in a ERBB3-regulated signal transduction pathway. Seems be involved in growth regulation. Acts a corepressor of the androgen receptor (AR) and is regulated by the ERBB3 ligand neuregulin-1/heregulin (HRG). Inhibits transcription of some E2F1-regulated promoters, probably by recruiting histone acetylase (HAT) activity. Binds RNA. Associates with 28S, 18S and 5.8S mature rRNAs, several rRNA precursors and probably U3 small nucleolar RNA. May be involved in regulation of intermediate and late steps of rRNA processing. May be involved in ribosome assembly. Mediates cap-independent translation of specific viral IRESs (internal ribosomal entry site). Together with PTBP1 is required for the translation initiation on the foot-and-mouth disease virus (FMDV) IRES. Regulates cell proliferation, differentiation, and survival. Isoform 1 suppresses apoptosis whereas isoform 2 promotes cell differentiation. This Rattus norvegicus (Rat) protein is Proliferation-associated protein 2G4 (Pa2g4).